Reading from the N-terminus, the 165-residue chain is Large ribosomal subunit protein uL11A (165 aa).

An N5-methylarginine modification is found at arginine 67.

Belongs to the universal ribosomal protein uL11 family. As to quaternary structure, component of the large ribosomal subunit (LSU). Mature yeast ribosomes consist of a small (40S) and a large (60S) subunit. The 40S small subunit contains 1 molecule of ribosomal RNA (18S rRNA) and at least 33 different proteins. The large 60S subunit contains 3 rRNA molecules (25S, 5.8S and 5S rRNA) and at least 46 different proteins.

The protein resides in the cytoplasm. The protein localises to the nucleus. Its subcellular location is the nucleolus. This protein binds directly to 26S ribosomal RNA. Its function is as follows. Component of the ribosome, a large ribonucleoprotein complex responsible for the synthesis of proteins in the cell. The small ribosomal subunit (SSU) binds messenger RNAs (mRNAs) and translates the encoded message by selecting cognate aminoacyl-transfer RNA (tRNA) molecules. The large subunit (LSU) contains the ribosomal catalytic site termed the peptidyl transferase center (PTC), which catalyzes the formation of peptide bonds, thereby polymerizing the amino acids delivered by tRNAs into a polypeptide chain. The nascent polypeptides leave the ribosome through a tunnel in the LSU and interact with protein factors that function in enzymatic processing, targeting, and the membrane insertion of nascent chains at the exit of the ribosomal tunnel. The polypeptide is Large ribosomal subunit protein uL11A (rpl1201) (Schizosaccharomyces pombe (strain 972 / ATCC 24843) (Fission yeast)).